The primary structure comprises 165 residues: MNQHYFNLLGNITWLWMNSPLHREWSCELLARNVIPAIENQQYMLLIDNDVPIAYCSWADLSLETEVKYIKDISSLTPEEWQSGDRRWIIDWVAPFGHSQLLIKNVSEIPDYSRQIYTLLSKTKRTGKIAYFKGGNLDKKTAKKRFDTYQERLGAALKNEFNFTK.

Catalysis depends on residues H22 and D91.

It belongs to the RTX toxin acyltransferase family.

It localises to the cytoplasm. The enzyme catalyses a fatty acyl-[ACP] + L-lysyl-[protein] = N(6)-(fatty acyl)-L-lysyl-[protein] + holo-[ACP] + H(+). Functionally, involved in fatty acylation of the protoxin (LktA) at two internal lysine residues, thereby converting it to the active toxin. The sequence is that of Leukotoxin-activating lysine-acyltransferase LktC (lktC) from Pasteurella haemolytica-like sp. (strain 5943B).